The primary structure comprises 621 residues: UvrABC system protein C (621 aa).

In terms of domain architecture, GIY-YIG spans 13–92 (NEPGVYLMKN…IKKYSPKYNI (80 aa)). Positions 204–239 (RSLLNKLKEEMQSASGNLEFEKAASLRDKMIAIENI) constitute a UVR domain.

It belongs to the UvrC family. As to quaternary structure, interacts with UvrB in an incision complex.

Its subcellular location is the cytoplasm. Functionally, the UvrABC repair system catalyzes the recognition and processing of DNA lesions. UvrC both incises the 5' and 3' sides of the lesion. The N-terminal half is responsible for the 3' incision and the C-terminal half is responsible for the 5' incision. The polypeptide is UvrABC system protein C (Clostridium beijerinckii (strain ATCC 51743 / NCIMB 8052) (Clostridium acetobutylicum)).